The chain runs to 242 residues: Probable transcriptional regulatory protein Bamb_2332 (242 aa).

The protein belongs to the TACO1 family.

The protein resides in the cytoplasm. The protein is Probable transcriptional regulatory protein Bamb_2332 of Burkholderia ambifaria (strain ATCC BAA-244 / DSM 16087 / CCUG 44356 / LMG 19182 / AMMD) (Burkholderia cepacia (strain AMMD)).